The primary structure comprises 186 residues: TATA-box-binding protein D (186 aa).

Repeat copies occupy residues 10 to 86 and 101 to 179.

Belongs to the TBP family.

Its function is as follows. General factor that plays a role in the activation of archaeal genes transcribed by RNA polymerase. Binds specifically to the TATA box promoter element which lies close to the position of transcription initiation. This chain is TATA-box-binding protein D (tbpD), found in Halobacterium salinarum (strain ATCC 700922 / JCM 11081 / NRC-1) (Halobacterium halobium).